The sequence spans 227 residues: MTARPLSELVEPGWARALQPVAEQVARMGQFLRAEIAAGRRYLPAGPNVLRAFTYPFDEVKVLIVGQDPYPTPGHAVGLSFSVAPDVSPLPRSLANIFQEYTADLGHPPPSCGDLTPWAQRGVLLLNRVLTVRPSNPASHRGKGWEPVTECAIRALTARQQPLVAILWGRDASTLKPILAQGNCVAIESPHPSPLSASRGFFGSRPFSRANKLLAEMGADEIDWRLP.

Asp-68 functions as the Proton acceptor in the catalytic mechanism.

The protein belongs to the uracil-DNA glycosylase (UDG) superfamily. UNG family.

The protein resides in the cytoplasm. It catalyses the reaction Hydrolyzes single-stranded DNA or mismatched double-stranded DNA and polynucleotides, releasing free uracil.. Its function is as follows. Excises uracil residues from the DNA which can arise as a result of misincorporation of dUMP residues by DNA polymerase or due to deamination of cytosine. The polypeptide is Uracil-DNA glycosylase (Mycobacterium avium (strain 104)).